The sequence spans 303 residues: MSARMVIVTGLSGAGRNSVLRALEDIGYEAVDNPPLRIVETLVRGDKPLAVGVDARTRDFSAEDVLSTIDRLQTRGCVRPELIFITASPEALQRRFSETRRRHPLALAGTVSEGIETEQALTRTLRNAADWVIDTSELSLAGLRQIIDQRFGLGGPGMSITLVSFGYPSGLPQEADLVLDTRFLRNPHYIPDLRDRTGLDPQVRDYIRQDPDFPEFFERVSGLTDYLLPRFVREGKKYVMIAFGCTGGKHRSVSLVEMLGSRLRNADWNVLIEHRSLGSRSVGGAWKAMPGAHQGAPMPGVQK.

10 to 17 (GLSGAGRN) provides a ligand contact to ATP. 54-57 (DART) serves as a coordination point for GTP.

It belongs to the RapZ-like family.

Displays ATPase and GTPase activities. The sequence is that of Nucleotide-binding protein Acry_0446 from Acidiphilium cryptum (strain JF-5).